The sequence spans 170 residues: tRNA-splicing endonuclease (170 aa).

Catalysis depends on residues Tyr110, His116, and Lys147.

It belongs to the tRNA-intron endonuclease family. Archaeal short subfamily. In terms of assembly, homotetramer; although the tetramer contains four active sites, only two participate in the cleavage. Therefore, it should be considered as a dimer of dimers.

It catalyses the reaction pretRNA = a 3'-half-tRNA molecule with a 5'-OH end + a 5'-half-tRNA molecule with a 2',3'-cyclic phosphate end + an intron with a 2',3'-cyclic phosphate and a 5'-hydroxyl terminus.. Endonuclease that removes tRNA introns. Cleaves pre-tRNA at the 5'- and 3'-splice sites to release the intron. The products are an intron and two tRNA half-molecules bearing 2',3' cyclic phosphate and 5'-OH termini. Recognizes a pseudosymmetric substrate in which 2 bulged loops of 3 bases are separated by a stem of 4 bp. This chain is tRNA-splicing endonuclease, found in Pyrococcus horikoshii (strain ATCC 700860 / DSM 12428 / JCM 9974 / NBRC 100139 / OT-3).